The following is a 268-amino-acid chain: MLTILAVSDSIGETANQVAVAAASQFTEKVDVKRIPYVKSLEDVEDVMNIANECESVIIVSTIITVNVREHLTQKAMEKNISVMNVLGPIINVASTILNTHPTYNPGAMRQTDEVYFKRIEAMEFAMQYDDSKDYRGLKNADVVLIGLSRTSKTPLCMYLANKGVKAINIPLMPEVGVPDEIYEIDRKKVFGLTINPLRLIEIRKRRLDKFHRITSDIEYAGDARVLEELDFADKIMRKIGCKTIDVTERAIEDTALIILEKIGYNNK.

147-154 is a binding site for ADP; the sequence is GLSRTSKT.

The protein belongs to the pyruvate, phosphate/water dikinase regulatory protein family. PDRP subfamily.

The catalysed reaction is N(tele)-phospho-L-histidyl/L-threonyl-[pyruvate, phosphate dikinase] + ADP = N(tele)-phospho-L-histidyl/O-phospho-L-threonyl-[pyruvate, phosphate dikinase] + AMP + H(+). The enzyme catalyses N(tele)-phospho-L-histidyl/O-phospho-L-threonyl-[pyruvate, phosphate dikinase] + phosphate + H(+) = N(tele)-phospho-L-histidyl/L-threonyl-[pyruvate, phosphate dikinase] + diphosphate. Bifunctional serine/threonine kinase and phosphorylase involved in the regulation of the pyruvate, phosphate dikinase (PPDK) by catalyzing its phosphorylation/dephosphorylation. This Clostridium beijerinckii (strain ATCC 51743 / NCIMB 8052) (Clostridium acetobutylicum) protein is Putative pyruvate, phosphate dikinase regulatory protein.